A 316-amino-acid polypeptide reads, in one-letter code: 4-hydroxy-3-methylbut-2-enyl diphosphate reductase (316 aa).

Position 12 (Cys-12) interacts with [4Fe-4S] cluster. (2E)-4-hydroxy-3-methylbut-2-enyl diphosphate is bound by residues His-41 and His-74. Residues His-41 and His-74 each coordinate dimethylallyl diphosphate. Isopentenyl diphosphate is bound by residues His-41 and His-74. Cys-96 contributes to the [4Fe-4S] cluster binding site. His-124 contacts (2E)-4-hydroxy-3-methylbut-2-enyl diphosphate. A dimethylallyl diphosphate-binding site is contributed by His-124. An isopentenyl diphosphate-binding site is contributed by His-124. The active-site Proton donor is Glu-126. Thr-169 lines the (2E)-4-hydroxy-3-methylbut-2-enyl diphosphate pocket. Cys-199 contacts [4Fe-4S] cluster. The (2E)-4-hydroxy-3-methylbut-2-enyl diphosphate site is built by Ser-227, Ser-228, Asn-229, and Ser-271. Dimethylallyl diphosphate is bound by residues Ser-227, Ser-228, Asn-229, and Ser-271. Isopentenyl diphosphate-binding residues include Ser-227, Ser-228, Asn-229, and Ser-271.

The protein belongs to the IspH family. [4Fe-4S] cluster serves as cofactor.

The catalysed reaction is isopentenyl diphosphate + 2 oxidized [2Fe-2S]-[ferredoxin] + H2O = (2E)-4-hydroxy-3-methylbut-2-enyl diphosphate + 2 reduced [2Fe-2S]-[ferredoxin] + 2 H(+). It catalyses the reaction dimethylallyl diphosphate + 2 oxidized [2Fe-2S]-[ferredoxin] + H2O = (2E)-4-hydroxy-3-methylbut-2-enyl diphosphate + 2 reduced [2Fe-2S]-[ferredoxin] + 2 H(+). It functions in the pathway isoprenoid biosynthesis; dimethylallyl diphosphate biosynthesis; dimethylallyl diphosphate from (2E)-4-hydroxy-3-methylbutenyl diphosphate: step 1/1. It participates in isoprenoid biosynthesis; isopentenyl diphosphate biosynthesis via DXP pathway; isopentenyl diphosphate from 1-deoxy-D-xylulose 5-phosphate: step 6/6. Functionally, catalyzes the conversion of 1-hydroxy-2-methyl-2-(E)-butenyl 4-diphosphate (HMBPP) into a mixture of isopentenyl diphosphate (IPP) and dimethylallyl diphosphate (DMAPP). Acts in the terminal step of the DOXP/MEP pathway for isoprenoid precursor biosynthesis. The polypeptide is 4-hydroxy-3-methylbut-2-enyl diphosphate reductase (Vibrio cholerae serotype O1 (strain ATCC 39315 / El Tor Inaba N16961)).